A 176-amino-acid polypeptide reads, in one-letter code: Urease accessory protein UreE (176 aa).

A disordered region spans residues 134–176 (EAGAYGSGGHHHHGESSQGHAHGPLAPIPVHQKIHRPSDIPSR).

The protein belongs to the UreE family.

Its subcellular location is the cytoplasm. Its function is as follows. Involved in urease metallocenter assembly. Binds nickel. Probably functions as a nickel donor during metallocenter assembly. The chain is Urease accessory protein UreE from Nitrosospira multiformis (strain ATCC 25196 / NCIMB 11849 / C 71).